Here is a 196-residue protein sequence, read N- to C-terminus: MTTILRIDSSIKGEAAVSRRLTQRILDRLLEAHPDATVVSRDLAQGIRQIDGPWLGSVFTAPEQRTADQQEIARTADAVMAEVKEADILVIALPVYNFGAPAQLKSWVDHIARRGESFVYTETGPVGLLTGKRAIVAFTSDGTPLGSELDHASGWLRQVLGFVGITDVDFVAADRMVFGADEAMARAEAAVAALAA.

Residue Ser-10 coordinates FMN.

This sequence belongs to the azoreductase type 1 family. Homodimer. It depends on FMN as a cofactor.

The enzyme catalyses 2 a quinone + NADH + H(+) = 2 a 1,4-benzosemiquinone + NAD(+). The catalysed reaction is N,N-dimethyl-1,4-phenylenediamine + anthranilate + 2 NAD(+) = 2-(4-dimethylaminophenyl)diazenylbenzoate + 2 NADH + 2 H(+). In terms of biological role, quinone reductase that provides resistance to thiol-specific stress caused by electrophilic quinones. Its function is as follows. Also exhibits azoreductase activity. Catalyzes the reductive cleavage of the azo bond in aromatic azo compounds to the corresponding amines. The polypeptide is FMN-dependent NADH:quinone oxidoreductase (Cereibacter sphaeroides (strain ATCC 17029 / ATH 2.4.9) (Rhodobacter sphaeroides)).